A 488-amino-acid polypeptide reads, in one-letter code: N-succinylglutamate 5-semialdehyde dehydrogenase (488 aa).

221–226 (GSSRTG) provides a ligand contact to NAD(+). Residues glutamate 244 and cysteine 278 contribute to the active site.

Belongs to the aldehyde dehydrogenase family. AstD subfamily.

It catalyses the reaction N-succinyl-L-glutamate 5-semialdehyde + NAD(+) + H2O = N-succinyl-L-glutamate + NADH + 2 H(+). Its pathway is amino-acid degradation; L-arginine degradation via AST pathway; L-glutamate and succinate from L-arginine: step 4/5. Functionally, catalyzes the NAD-dependent reduction of succinylglutamate semialdehyde into succinylglutamate. In Pseudomonas fluorescens (strain Pf0-1), this protein is N-succinylglutamate 5-semialdehyde dehydrogenase.